Consider the following 116-residue polypeptide: FK506-binding protein 1 (116 aa).

In terms of domain architecture, PPIase FKBP-type spans Gly19 to Asn116.

Belongs to the FKBP-type PPIase family. FKBP1 subfamily.

The protein localises to the cytoplasm. The enzyme catalyses [protein]-peptidylproline (omega=180) = [protein]-peptidylproline (omega=0). Inhibited by both FK506 and rapamycin. Its function is as follows. PPIases accelerate the folding of proteins. It catalyzes the cis-trans isomerization of proline imidic peptide bonds in oligopeptides. In Aspergillus oryzae (strain ATCC 42149 / RIB 40) (Yellow koji mold), this protein is FK506-binding protein 1 (fpr1).